A 178-amino-acid polypeptide reads, in one-letter code: RNA pyrophosphohydrolase (178 aa).

The Nudix hydrolase domain occupies 18–171 (PYRPCVGLMV…KRKVYEQVVA (154 aa)). The short motif at 59-80 (GGIDKGEDPAQAALRELYEETG) is the Nudix box element.

It belongs to the Nudix hydrolase family. RppH subfamily. A divalent metal cation is required as a cofactor.

In terms of biological role, accelerates the degradation of transcripts by removing pyrophosphate from the 5'-end of triphosphorylated RNA, leading to a more labile monophosphorylated state that can stimulate subsequent ribonuclease cleavage. The sequence is that of RNA pyrophosphohydrolase from Brucella abortus (strain 2308).